Consider the following 536-residue polypeptide: 1,4-beta-D-glucan cellobiohydrolase B (536 aa).

The N-terminal stretch at 1-21 (MSSFQIYRAALLLSILATANA) is a signal peptide. A catalytic region spans residues 22–458 (QQVGTYTTET…SNIKFGPIGS (437 aa)). Glu233 functions as the Nucleophile in the catalytic mechanism. Glu238 functions as the Proton donor in the catalytic mechanism. 2 N-linked (GlcNAc...) asparagine glycosylation sites follow: Asn351 and Asn414. Positions 459 to 500 (TYSSGSSSGSGSSSSSSSTTTKATSTTLKTTSTTSSGSSSTS) are ser/Thr-rich linker. The tract at residues 464–499 (SSSGSGSSSSSSSTTTKATSTTLKTTSTTSSGSSST) is disordered. Positions 500–536 (SAAQAYGQCGGQGWTGPTTCVSGYTCTYENAYYSQCL) constitute a CBM1 domain. Disulfide bonds link Cys508–Cys525 and Cys519–Cys535.

The protein belongs to the glycosyl hydrolase 7 (cellulase C) family.

The protein localises to the secreted. The enzyme catalyses Hydrolysis of (1-&gt;4)-beta-D-glucosidic linkages in cellulose and cellotetraose, releasing cellobiose from the non-reducing ends of the chains.. Functionally, the biological conversion of cellulose to glucose generally requires three types of hydrolytic enzymes: (1) Endoglucanases which cut internal beta-1,4-glucosidic bonds; (2) Exocellobiohydrolases that cut the disaccharide cellobiose from the non-reducing end of the cellulose polymer chain; (3) Beta-1,4-glucosidases which hydrolyze the cellobiose and other short cello-oligosaccharides to glucose. The chain is 1,4-beta-D-glucan cellobiohydrolase B (cbhB) from Aspergillus niger.